A 448-amino-acid chain; its full sequence is DNA primase DnaG (448 aa).

One can recognise a Toprim domain in the interval Asp-186–Pro-260. Mg(2+)-binding residues include Glu-192, Asp-234, and Asp-236. Positions Ala-318–Gln-340 are disordered. Basic and acidic residues predominate over residues Pro-329–Gln-338.

This sequence belongs to the archaeal DnaG primase family. Forms a ternary complex with MCM helicase and DNA. Component of the archaeal exosome complex. Mg(2+) is required as a cofactor.

The enzyme catalyses ssDNA + n NTP = ssDNA/pppN(pN)n-1 hybrid + (n-1) diphosphate.. RNA polymerase that catalyzes the synthesis of short RNA molecules used as primers for DNA polymerase during DNA replication. Also part of the exosome, which is a complex involved in RNA degradation. Acts as a poly(A)-binding protein that enhances the interaction between heteromeric, adenine-rich transcripts and the exosome. The sequence is that of DNA primase DnaG from Thermoplasma acidophilum (strain ATCC 25905 / DSM 1728 / JCM 9062 / NBRC 15155 / AMRC-C165).